A 444-amino-acid chain; its full sequence is Probable galactarate/D-glucarate transporter GarP (444 aa).

Topologically, residues 1–11 are cytoplasmic; it reads MILDTVDEKKK. The chain crosses the membrane as a helical span at residues 12–32; sequence GVHTRYLILLIIFIVTAVNYA. Residues 33–56 lie on the Periplasmic side of the membrane; sequence DRATLSIAGTEVAKELQLSAVSMG. A helical transmembrane segment spans residues 57–77; sequence YIFSAFGWAYLLMQIPGGWLL. At 78–89 the chain is on the cytoplasmic side; the sequence is DKFGSKKVYTYS. A run of 2 helical transmembrane segments spans residues 90 to 110 and 111 to 131; these read LFFWSLFTFLQGFVDMFPLAW and AGISMFFMRFMLGFSEAPSFP. Residues 132–157 lie on the Cytoplasmic side of the membrane; sequence ANARIVAAWFPTKERGTASAIFNSAQ. 2 helical membrane passes run 158 to 178 and 179 to 199; these read YFSLALFSPLLGWLTFAWGWE and HVFTVMGVIGFVLTALWIKLI. At 200–252 the chain is on the cytoplasmic side; the sequence is HNPTDHPRMSAEELKFISENGAVVDMDHKKPGSAAASGPKLHYIKQLLSNRMM. The helical transmembrane segment at 253 to 273 threads the bilayer; sequence LGVFFGQYFINTITWFFLTWF. Over 274-288 the chain is Periplasmic; that stretch reads PIYLVQEKGMSILKV. The helical transmembrane segment at 289-309 threads the bilayer; the sequence is GLVASIPALCGFAGGVLGGVF. Over 310–319 the chain is Cytoplasmic; the sequence is SDYLIKRGLS. A helical membrane pass occupies residues 320–340; it reads LTLARKLPIVLGMLLASTIIL. Residues 341–350 are Periplasmic-facing; it reads CNYTNNTTLV. Residues 351-371 form a helical membrane-spanning segment; the sequence is VMLMALAFFGKGFGALGWPVI. The Cytoplasmic segment spans residues 372–385; the sequence is SDTAPKEIVGLCGG. The helical transmembrane segment at 386-406 threads the bilayer; it reads VFNVFGNVASIVTPLVIGYLV. The Periplasmic portion of the chain corresponds to 407-413; it reads SELHSFN. The chain crosses the membrane as a helical span at residues 414–434; the sequence is AALVFVGCSALMAMVCYLFVV. Over 435–444 the chain is Cytoplasmic; sequence GDIKRMELQK.

This sequence belongs to the major facilitator superfamily. Phthalate permease family.

It localises to the cell inner membrane. The enzyme catalyses galactarate(in) + H(+)(in) = galactarate(out) + H(+)(out). The catalysed reaction is D-glucarate(in) + H(+)(in) = D-glucarate(out) + H(+)(out). It catalyses the reaction (R)-glycerate(in) + H(+)(in) = (R)-glycerate(out) + H(+)(out). In terms of biological role, probably involved in the uptake of galactarate and/or D-glucarate. May also transport D-glycerate. In Escherichia coli (strain K12), this protein is Probable galactarate/D-glucarate transporter GarP.